Reading from the N-terminus, the 282-residue chain is Bifunctional protein FolD (282 aa).

NADP(+) is bound by residues 163–165 (NRS), Thr-188, and Ile-229.

Belongs to the tetrahydrofolate dehydrogenase/cyclohydrolase family. In terms of assembly, homodimer.

The catalysed reaction is (6R)-5,10-methylene-5,6,7,8-tetrahydrofolate + NADP(+) = (6R)-5,10-methenyltetrahydrofolate + NADPH. It catalyses the reaction (6R)-5,10-methenyltetrahydrofolate + H2O = (6R)-10-formyltetrahydrofolate + H(+). The protein operates within one-carbon metabolism; tetrahydrofolate interconversion. Functionally, catalyzes the oxidation of 5,10-methylenetetrahydrofolate to 5,10-methenyltetrahydrofolate and then the hydrolysis of 5,10-methenyltetrahydrofolate to 10-formyltetrahydrofolate. This Malacoplasma penetrans (strain HF-2) (Mycoplasma penetrans) protein is Bifunctional protein FolD.